We begin with the raw amino-acid sequence, 253 residues long: 5'/3'-nucleotidase SurE (253 aa).

Residues Asp8, Asp9, Ser39, and Asn92 each coordinate a divalent metal cation.

Belongs to the SurE nucleotidase family. Requires a divalent metal cation as cofactor.

The protein localises to the cytoplasm. It carries out the reaction a ribonucleoside 5'-phosphate + H2O = a ribonucleoside + phosphate. The catalysed reaction is a ribonucleoside 3'-phosphate + H2O = a ribonucleoside + phosphate. The enzyme catalyses [phosphate](n) + H2O = [phosphate](n-1) + phosphate + H(+). Its function is as follows. Nucleotidase with a broad substrate specificity as it can dephosphorylate various ribo- and deoxyribonucleoside 5'-monophosphates and ribonucleoside 3'-monophosphates with highest affinity to 3'-AMP. Also hydrolyzes polyphosphate (exopolyphosphatase activity) with the preference for short-chain-length substrates (P20-25). Might be involved in the regulation of dNTP and NTP pools, and in the turnover of 3'-mononucleotides produced by numerous intracellular RNases (T1, T2, and F) during the degradation of various RNAs. The protein is 5'/3'-nucleotidase SurE of Klebsiella pneumoniae (strain 342).